Here is a 346-residue protein sequence, read N- to C-terminus: Phosphoribosylformylglycinamidine cyclo-ligase (346 aa).

The protein belongs to the AIR synthase family.

The protein resides in the cytoplasm. The catalysed reaction is 2-formamido-N(1)-(5-O-phospho-beta-D-ribosyl)acetamidine + ATP = 5-amino-1-(5-phospho-beta-D-ribosyl)imidazole + ADP + phosphate + H(+). It participates in purine metabolism; IMP biosynthesis via de novo pathway; 5-amino-1-(5-phospho-D-ribosyl)imidazole from N(2)-formyl-N(1)-(5-phospho-D-ribosyl)glycinamide: step 2/2. This chain is Phosphoribosylformylglycinamidine cyclo-ligase, found in Prochlorococcus marinus (strain NATL1A).